Here is a 122-residue protein sequence, read N- to C-terminus: Small ribosomal subunit protein uS12c (122 aa).

This sequence belongs to the universal ribosomal protein uS12 family. In terms of assembly, part of the 30S ribosomal subunit.

Its subcellular location is the plastid. It is found in the chloroplast. Functionally, with S4 and S5 plays an important role in translational accuracy. Located at the interface of the 30S and 50S subunits. In Mesostigma viride (Green alga), this protein is Small ribosomal subunit protein uS12c (rps12).